Reading from the N-terminus, the 212-residue chain is Pyridoxine/pyridoxamine 5'-phosphate oxidase (212 aa).

Substrate-binding positions include 8–11 (RREY) and lysine 66. FMN is bound by residues 61–66 (RIVLLK), 76–77 (FT), arginine 82, lysine 83, and glutamine 105. Residues tyrosine 123, arginine 127, and serine 131 each coordinate substrate. FMN-binding positions include 140-141 (QS) and tryptophan 185. Residue 191–193 (RLH) participates in substrate binding. Arginine 195 is an FMN binding site.

The protein belongs to the pyridoxamine 5'-phosphate oxidase family. As to quaternary structure, homodimer. It depends on FMN as a cofactor.

The catalysed reaction is pyridoxamine 5'-phosphate + O2 + H2O = pyridoxal 5'-phosphate + H2O2 + NH4(+). The enzyme catalyses pyridoxine 5'-phosphate + O2 = pyridoxal 5'-phosphate + H2O2. The protein operates within cofactor metabolism; pyridoxal 5'-phosphate salvage; pyridoxal 5'-phosphate from pyridoxamine 5'-phosphate: step 1/1. It functions in the pathway cofactor metabolism; pyridoxal 5'-phosphate salvage; pyridoxal 5'-phosphate from pyridoxine 5'-phosphate: step 1/1. In terms of biological role, catalyzes the oxidation of either pyridoxine 5'-phosphate (PNP) or pyridoxamine 5'-phosphate (PMP) into pyridoxal 5'-phosphate (PLP). The sequence is that of Pyridoxine/pyridoxamine 5'-phosphate oxidase from Shewanella sp. (strain MR-4).